Reading from the N-terminus, the 265-residue chain is Exosome complex component RRP42 (265 aa).

Belongs to the RNase PH family. Component of the RNA exosome complex. Specifically part of the catalytically inactive RNA exosome core complex (Exo-9) which may associate with the catalytic subunits RRP6 and DIS3 in cytoplasmic- and nuclear-specific RNA exosome complex forms. Exo-9 is formed by a hexameric base ring of RNase PH domain-containing subunits and a cap ring consisting of CSL4, RRP4 and RRP40.

Its subcellular location is the cytoplasm. The protein localises to the nucleus. The protein resides in the nucleolus. Non-catalytic component of the RNA exosome complex which has 3'-&gt;5' exoribonuclease activity and participates in a multitude of cellular RNA processing and degradation events. In the nucleus, the RNA exosome complex is involved in proper maturation of stable RNA species such as rRNA, snRNA and snoRNA, in the elimination of RNA processing by-products and non-coding 'pervasive' transcripts, such as antisense RNA species and cryptic unstable transcripts (CUTs), and of mRNAs with processing defects, thereby limiting or excluding their export to the cytoplasm. In the cytoplasm, the RNA exosome complex is involved in general mRNA turnover and in RNA surveillance pathways, preventing translation of aberrant mRNAs. The catalytic inactive RNA exosome core complex of 9 subunits (Exo-9) is proposed to play a pivotal role in the binding and presentation of RNA for ribonucleolysis, and to serve as a scaffold for the association with catalytic subunits and accessory proteins or complexes. RRP42 is part of the hexameric ring of RNase PH domain-containing subunits proposed to form a central channel which threads RNA substrates for degradation. In Saccharomyces cerevisiae (strain ATCC 204508 / S288c) (Baker's yeast), this protein is Exosome complex component RRP42 (RRP42).